The primary structure comprises 334 residues: Mitochondrial glycine transporter (334 aa).

Solcar repeat units follow at residues 22–106, 135–219, and 237–321; these read SKTT…LRQG, LSNW…LKRR, and SSSS…LILR. 6 helical membrane-spanning segments follow: residues 28–53, 81–107, 141–166, 194–217, 241–267, and 296–314; these read FVAGLCSGLTSSILLQPADLLKTRVQ, GTLPSALRTGFGSALYFTSLNALRQGI, LATGAIARVAAGFVMMPVTVLKVRYE, GFGATAARDAPYAGLYVLFYEQLK, INFVSGGLAAGLATAITNPFDAVKTRL, and GLGLRITRKALSSALAWTV.

The protein belongs to the mitochondrial carrier (TC 2.A.29) family. SLC25A38 subfamily.

The protein localises to the mitochondrion inner membrane. The catalysed reaction is glycine(in) = glycine(out). Its function is as follows. Mitochondrial glycine transporter that imports glycine into the mitochondrial matrix. Plays an important role in providing glycine for the first enzymatic step in heme biosynthesis, the condensation of glycine with succinyl-CoA to produce 5-aminolevulinate (ALA) in the mitochondrial matrix. This chain is Mitochondrial glycine transporter, found in Aspergillus clavatus (strain ATCC 1007 / CBS 513.65 / DSM 816 / NCTC 3887 / NRRL 1 / QM 1276 / 107).